Consider the following 159-residue polypeptide: Superoxide dismutase [Cu-Zn] (159 aa).

Positions 47, 49, and 64 each coordinate Cu cation. A disulfide bridge links cysteine 58 with cysteine 150. Zn(2+) contacts are provided by histidine 64, histidine 72, histidine 81, and aspartate 84. Histidine 121 provides a ligand contact to Cu cation.

The protein belongs to the Cu-Zn superoxide dismutase family. Cu cation serves as cofactor. Zn(2+) is required as a cofactor.

The protein localises to the cytoplasm. It catalyses the reaction 2 superoxide + 2 H(+) = H2O2 + O2. Destroys radicals which are normally produced within the cells and which are toxic to biological systems. The sequence is that of Superoxide dismutase [Cu-Zn] (SOD) from Haemonchus contortus (Barber pole worm).